We begin with the raw amino-acid sequence, 440 residues long: Argininosuccinate lyase (440 aa).

Belongs to the lyase 1 family. Argininosuccinate lyase subfamily.

It is found in the cytoplasm. It catalyses the reaction 2-(N(omega)-L-arginino)succinate = fumarate + L-arginine. It functions in the pathway amino-acid biosynthesis; L-arginine biosynthesis; L-arginine from L-ornithine and carbamoyl phosphate: step 3/3. The protein is Argininosuccinate lyase of Clostridium botulinum (strain Loch Maree / Type A3).